The following is a 167-amino-acid chain: Urease accessory protein UreE (167 aa).

The segment at Ser-135–Gln-167 is disordered. A compositionally biased stretch (basic residues) spans Lys-157–Gln-167.

It belongs to the UreE family.

It localises to the cytoplasm. Its function is as follows. Involved in urease metallocenter assembly. Binds nickel. Probably functions as a nickel donor during metallocenter assembly. This is Urease accessory protein UreE from Nitrosococcus oceani (strain ATCC 19707 / BCRC 17464 / JCM 30415 / NCIMB 11848 / C-107).